The sequence spans 156 residues: Crossover junction endodeoxyribonuclease RuvC (156 aa).

Active-site residues include Asp9, Glu69, and Asp141. Mg(2+) contacts are provided by Asp9, Glu69, and Asp141.

Belongs to the RuvC family. In terms of assembly, homodimer which binds Holliday junction (HJ) DNA. The HJ becomes 2-fold symmetrical on binding to RuvC with unstacked arms; it has a different conformation from HJ DNA in complex with RuvA. In the full resolvosome a probable DNA-RuvA(4)-RuvB(12)-RuvC(2) complex forms which resolves the HJ. Mg(2+) is required as a cofactor.

It localises to the cytoplasm. The catalysed reaction is Endonucleolytic cleavage at a junction such as a reciprocal single-stranded crossover between two homologous DNA duplexes (Holliday junction).. In terms of biological role, the RuvA-RuvB-RuvC complex processes Holliday junction (HJ) DNA during genetic recombination and DNA repair. Endonuclease that resolves HJ intermediates. Cleaves cruciform DNA by making single-stranded nicks across the HJ at symmetrical positions within the homologous arms, yielding a 5'-phosphate and a 3'-hydroxyl group; requires a central core of homology in the junction. The consensus cleavage sequence is 5'-(A/T)TT(C/G)-3'. Cleavage occurs on the 3'-side of the TT dinucleotide at the point of strand exchange. HJ branch migration catalyzed by RuvA-RuvB allows RuvC to scan DNA until it finds its consensus sequence, where it cleaves and resolves the cruciform DNA. The polypeptide is Crossover junction endodeoxyribonuclease RuvC (Acaryochloris marina (strain MBIC 11017)).